A 219-amino-acid polypeptide reads, in one-letter code: 7-carboxy-7-deazaguanine synthase (219 aa).

Residues 22–24 (IQG) and arginine 37 contribute to the substrate site. In terms of domain architecture, Radical SAM core spans 28 to 219 (LVGLPSVFIR…PQVHKCFDLK (192 aa)). Residues cysteine 41, cysteine 45, and cysteine 48 each contribute to the [4Fe-4S] cluster site. Threonine 81 contributes to the substrate binding site. S-adenosyl-L-methionine contacts are provided by residues glycine 83 and 130 to 132 (SPK).

It belongs to the radical SAM superfamily. 7-carboxy-7-deazaguanine synthase family. Homodimer. [4Fe-4S] cluster serves as cofactor. Requires S-adenosyl-L-methionine as cofactor. It depends on Mg(2+) as a cofactor.

It catalyses the reaction 6-carboxy-5,6,7,8-tetrahydropterin + H(+) = 7-carboxy-7-deazaguanine + NH4(+). Its pathway is purine metabolism; 7-cyano-7-deazaguanine biosynthesis. Functionally, catalyzes the complex heterocyclic radical-mediated conversion of 6-carboxy-5,6,7,8-tetrahydropterin (CPH4) to 7-carboxy-7-deazaguanine (CDG), a step common to the biosynthetic pathways of all 7-deazapurine-containing compounds. This chain is 7-carboxy-7-deazaguanine synthase, found in Aquifex aeolicus (strain VF5).